We begin with the raw amino-acid sequence, 214 residues long: Ribonuclease HII (214 aa).

Residues 26 to 214 enclose the RNase H type-2 domain; the sequence is EIVCGVDEAG…PVRAALDLIR (189 aa). Positions 32, 33, and 124 each coordinate a divalent metal cation.

It belongs to the RNase HII family. Mn(2+) is required as a cofactor. It depends on Mg(2+) as a cofactor.

It is found in the cytoplasm. It carries out the reaction Endonucleolytic cleavage to 5'-phosphomonoester.. Endonuclease that specifically degrades the RNA of RNA-DNA hybrids. This chain is Ribonuclease HII, found in Burkholderia cenocepacia (strain HI2424).